The primary structure comprises 144 residues: Cytochrome c oxidase subunit 4 isoform 1, mitochondrial (144 aa).

Over 1–73 the chain is Mitochondrial matrix; that stretch reads SVVKSEDYTL…SFAEMNRGSN (73 aa). The residue at position 4 (Lys-4) is an N6-acetyllysine; alternate. Lys-4 bears the N6-succinyllysine; alternate mark. A phosphoserine mark is found at Ser-31 and Ser-33. N6-acetyllysine; alternate is present on Lys-35. An N6-succinyllysine; alternate modification is found at Lys-35. Lys-42 is modified (N6-acetyllysine). Residues 74-99 traverse the membrane as a helical segment; the sequence is EWKTVVGAAMFFIGFTAILIMLEKRY. The Mitochondrial intermembrane portion of the chain corresponds to 100–144; sequence VYGPLPHTFDKEWVAMQTKRMLDLKVNPVDGLASKWDYEKKEWKK.

The protein belongs to the cytochrome c oxidase IV family. As to quaternary structure, component of the cytochrome c oxidase (complex IV, CIV), a multisubunit enzyme composed of 14 subunits. The complex is composed of a catalytic core of 3 subunits MT-CO1, MT-CO2 and MT-CO3, encoded in the mitochondrial DNA, and 11 supernumerary subunits COX4I, COX5A, COX5B, COX6A, COX6B, COX6C, COX7A, COX7B, COX7C, COX8 and NDUFA4, which are encoded in the nuclear genome. The complex exists as a monomer or a dimer and forms supercomplexes (SCs) in the inner mitochondrial membrane with NADH-ubiquinone oxidoreductase (complex I, CI) and ubiquinol-cytochrome c oxidoreductase (cytochrome b-c1 complex, complex III, CIII), resulting in different assemblies (supercomplex SCI(1)III(2)IV(1) and megacomplex MCI(2)III(2)IV(2)). Interacts with PHB2; the interaction decreases in absence of SPHK2. Interacts with AFG1L. Interacts with ABCB7; this interaction allows the regulation of cellular iron homeostasis and cellular reactive oxygen species (ROS) levels in cardiomyocytes. Interacts with FLVCR2; this interaction occurs in the absence of heme and is disrupted upon heme binding. Interacts with IRGC.

The protein localises to the mitochondrion inner membrane. The protein operates within energy metabolism; oxidative phosphorylation. Functionally, component of the cytochrome c oxidase, the last enzyme in the mitochondrial electron transport chain which drives oxidative phosphorylation. The respiratory chain contains 3 multisubunit complexes succinate dehydrogenase (complex II, CII), ubiquinol-cytochrome c oxidoreductase (cytochrome b-c1 complex, complex III, CIII) and cytochrome c oxidase (complex IV, CIV), that cooperate to transfer electrons derived from NADH and succinate to molecular oxygen, creating an electrochemical gradient over the inner membrane that drives transmembrane transport and the ATP synthase. Cytochrome c oxidase is the component of the respiratory chain that catalyzes the reduction of oxygen to water. Electrons originating from reduced cytochrome c in the intermembrane space (IMS) are transferred via the dinuclear copper A center (CU(A)) of subunit 2 and heme A of subunit 1 to the active site in subunit 1, a binuclear center (BNC) formed by heme A3 and copper B (CU(B)). The BNC reduces molecular oxygen to 2 water molecules using 4 electrons from cytochrome c in the IMS and 4 protons from the mitochondrial matrix. The sequence is that of Cytochrome c oxidase subunit 4 isoform 1, mitochondrial (COX4I1) from Pithecia pithecia (White-faced saki).